We begin with the raw amino-acid sequence, 99 residues long: Large ribosomal subunit protein uL23 (99 aa).

The protein belongs to the universal ribosomal protein uL23 family. In terms of assembly, part of the 50S ribosomal subunit. Contacts protein L29, and trigger factor when it is bound to the ribosome.

One of the early assembly proteins it binds 23S rRNA. One of the proteins that surrounds the polypeptide exit tunnel on the outside of the ribosome. Forms the main docking site for trigger factor binding to the ribosome. In Francisella tularensis subsp. holarctica (strain OSU18), this protein is Large ribosomal subunit protein uL23.